The chain runs to 508 residues: Aromatic-L-amino-acid decarboxylase (508 aa).

Thr-82 contributes to the substrate binding site. Ala-148 and Ser-149 together coordinate pyridoxal 5'-phosphate. Position 192 (His-192) interacts with substrate. Thr-246 and Asn-300 together coordinate pyridoxal 5'-phosphate. An N6-(pyridoxal phosphate)lysine modification is found at Lys-303.

The protein belongs to the group II decarboxylase family. Homodimer. Pyridoxal 5'-phosphate serves as cofactor.

It carries out the reaction L-dopa + H(+) = dopamine + CO2. The catalysed reaction is 5-hydroxy-L-tryptophan + H(+) = serotonin + CO2. In terms of biological role, catalyzes the decarboxylation of L-3,4-dihydroxyphenylalanine (DOPA) to dopamine, L-5-hydroxytryptophan to serotonin and L-tryptophan to tryptamine. The sequence is that of Aromatic-L-amino-acid decarboxylase (Ddc) from Manduca sexta (Tobacco hawkmoth).